The chain runs to 348 residues: Phosphoribosylformylglycinamidine cyclo-ligase (348 aa).

This sequence belongs to the AIR synthase family.

It is found in the cytoplasm. It carries out the reaction 2-formamido-N(1)-(5-O-phospho-beta-D-ribosyl)acetamidine + ATP = 5-amino-1-(5-phospho-beta-D-ribosyl)imidazole + ADP + phosphate + H(+). It participates in purine metabolism; IMP biosynthesis via de novo pathway; 5-amino-1-(5-phospho-D-ribosyl)imidazole from N(2)-formyl-N(1)-(5-phospho-D-ribosyl)glycinamide: step 2/2. This is Phosphoribosylformylglycinamidine cyclo-ligase from Geobacter metallireducens (strain ATCC 53774 / DSM 7210 / GS-15).